The primary structure comprises 452 residues: Trigger factor (452 aa).

In terms of domain architecture, PPIase FKBP-type spans 171–256; that stretch reads GDRVTVSFKG…ATKLEAPQET (86 aa).

The protein belongs to the FKBP-type PPIase family. Tig subfamily.

Its subcellular location is the cytoplasm. It catalyses the reaction [protein]-peptidylproline (omega=180) = [protein]-peptidylproline (omega=0). Involved in protein export. Acts as a chaperone by maintaining the newly synthesized protein in an open conformation. Functions as a peptidyl-prolyl cis-trans isomerase. In Rhodopseudomonas palustris (strain ATCC BAA-98 / CGA009), this protein is Trigger factor.